Reading from the N-terminus, the 183-residue chain is Hypoxanthine/guanine phosphoribosyltransferase (183 aa).

It belongs to the purine/pyrimidine phosphoribosyltransferase family. Archaeal HPRT subfamily. As to quaternary structure, homodimer.

The protein localises to the cytoplasm. The catalysed reaction is IMP + diphosphate = hypoxanthine + 5-phospho-alpha-D-ribose 1-diphosphate. The enzyme catalyses GMP + diphosphate = guanine + 5-phospho-alpha-D-ribose 1-diphosphate. It participates in purine metabolism; IMP biosynthesis via salvage pathway; IMP from hypoxanthine: step 1/1. In terms of biological role, catalyzes a salvage reaction resulting in the formation of IMP that is energically less costly than de novo synthesis. The protein is Hypoxanthine/guanine phosphoribosyltransferase of Methanotorris igneus (strain DSM 5666 / JCM 11834 / Kol 5).